We begin with the raw amino-acid sequence, 422 residues long: Probable tRNA pseudouridine synthase D (422 aa).

Aspartate 83 serves as the catalytic Nucleophile. The TRUD domain maps to 164–386 (GFPNYFGSQR…AGGRRELLIK (223 aa)).

Belongs to the pseudouridine synthase TruD family.

It catalyses the reaction uridine(13) in tRNA = pseudouridine(13) in tRNA. Its function is as follows. Could be responsible for synthesis of pseudouridine from uracil-13 in transfer RNAs. The protein is Probable tRNA pseudouridine synthase D of Thermococcus sibiricus (strain DSM 12597 / MM 739).